The primary structure comprises 49 residues: Large ribosomal subunit protein bL33 (49 aa).

It belongs to the bacterial ribosomal protein bL33 family.

This Pseudothermotoga lettingae (strain ATCC BAA-301 / DSM 14385 / NBRC 107922 / TMO) (Thermotoga lettingae) protein is Large ribosomal subunit protein bL33.